Here is a 179-residue protein sequence, read N- to C-terminus: tRNA (cytidine(56)-2'-O)-methyltransferase (179 aa).

Position 84 (leucine 84) interacts with S-adenosyl-L-methionine.

This sequence belongs to the aTrm56 family. As to quaternary structure, homodimer.

The protein resides in the cytoplasm. The catalysed reaction is cytidine(56) in tRNA + S-adenosyl-L-methionine = 2'-O-methylcytidine(56) in tRNA + S-adenosyl-L-homocysteine + H(+). Specifically catalyzes the AdoMet-dependent 2'-O-ribose methylation of cytidine at position 56 in tRNAs. This Methanothermobacter thermautotrophicus (strain ATCC 29096 / DSM 1053 / JCM 10044 / NBRC 100330 / Delta H) (Methanobacterium thermoautotrophicum) protein is tRNA (cytidine(56)-2'-O)-methyltransferase.